The sequence spans 155 residues: Ribosome maturation factor RimP (155 aa).

It belongs to the RimP family.

It localises to the cytoplasm. In terms of biological role, required for maturation of 30S ribosomal subunits. In Bacteroides thetaiotaomicron (strain ATCC 29148 / DSM 2079 / JCM 5827 / CCUG 10774 / NCTC 10582 / VPI-5482 / E50), this protein is Ribosome maturation factor RimP.